A 138-amino-acid chain; its full sequence is Transcription antitermination protein NusB (138 aa).

The protein belongs to the NusB family.

Functionally, involved in transcription antitermination. Required for transcription of ribosomal RNA (rRNA) genes. Binds specifically to the boxA antiterminator sequence of the ribosomal RNA (rrn) operons. The sequence is that of Transcription antitermination protein NusB from Coxiella burnetii (strain Dugway 5J108-111).